Here is a 122-residue protein sequence, read N- to C-terminus: Large ribosomal subunit protein uL14 (122 aa).

It belongs to the universal ribosomal protein uL14 family. Part of the 50S ribosomal subunit. Forms a cluster with proteins L3 and L19. In the 70S ribosome, L14 and L19 interact and together make contacts with the 16S rRNA in bridges B5 and B8.

Functionally, binds to 23S rRNA. Forms part of two intersubunit bridges in the 70S ribosome. The sequence is that of Large ribosomal subunit protein uL14 from Variovorax paradoxus (strain S110).